Reading from the N-terminus, the 154-residue chain is MTVYTYTVFLFNWENIGLMEQQNPDRLKKDRELIYAIVTAKGIISRFFWSILSFLITNLIFFFAAFVALLIYLLASVDNQFAFVFIAAIIFIIFYNIFFLSYLLFIYFKGQKAIENNCKYLLTILDIKSDELLPFSLLGSLRKGYMLDEMLLEQ.

Helical transmembrane passes span 54-74 (FLITNLIFFFAAFVALLIYLL) and 81-101 (FAFVFIAAIIFIIFYNIFFLS).

It localises to the cell membrane. This is an uncharacterized protein from Mycoplasma genitalium (strain ATCC 33530 / DSM 19775 / NCTC 10195 / G37) (Mycoplasmoides genitalium).